Here is an 87-residue protein sequence, read N- to C-terminus: Small ribosomal subunit protein uS17 (87 aa).

Belongs to the universal ribosomal protein uS17 family. In terms of assembly, part of the 30S ribosomal subunit.

Functionally, one of the primary rRNA binding proteins, it binds specifically to the 5'-end of 16S ribosomal RNA. This Thioalkalivibrio sulfidiphilus (strain HL-EbGR7) protein is Small ribosomal subunit protein uS17.